A 137-amino-acid polypeptide reads, in one-letter code: ATP synthase epsilon chain (137 aa).

Belongs to the ATPase epsilon chain family. F-type ATPases have 2 components, CF(1) - the catalytic core - and CF(0) - the membrane proton channel. CF(1) has five subunits: alpha(3), beta(3), gamma(1), delta(1), epsilon(1). CF(0) has three main subunits: a, b and c.

The protein resides in the cell inner membrane. Produces ATP from ADP in the presence of a proton gradient across the membrane. The chain is ATP synthase epsilon chain from Pseudoalteromonas atlantica (strain T6c / ATCC BAA-1087).